A 68-amino-acid chain; its full sequence is Beta-defensin 1 (68 aa).

Positions 1–21 are cleaved as a signal peptide; it reads MRTSYLLLFILCLVLCDMDSG. The propeptide occupies 22 to 32; it reads DTFLTGLGHRS. Intrachain disulfides connect C37–C66, C44–C59, and C49–C67.

The protein belongs to the beta-defensin family. In terms of assembly, monomer. Homodimer.

It is found in the secreted. The protein localises to the membrane. Has bactericidal activity. May act as a ligand for C-C chemokine receptor CCR6. Positively regulates the sperm motility and bactericidal activity in a CCR6-dependent manner. Binds to CCR6 and triggers Ca2+ mobilization in the sperm which is important for its motility. This chain is Beta-defensin 1 (DEFB1), found in Saguinus oedipus (Cotton-top tamarin).